The sequence spans 97 residues: Defective intron-associated endonuclease 3 (97 aa).

This endonuclease is specific to the nrdB gene splice junction and is involved in intron homing. The polypeptide is Defective intron-associated endonuclease 3 (ITEVIIIR) (Escherichia coli (Bacteriophage T4)).